We begin with the raw amino-acid sequence, 381 residues long: cAMP-dependent protein kinase type I-alpha regulatory subunit (381 aa).

Met-1 carries the post-translational modification N-acetylmethionine. Positions 1 to 135 are dimerization and phosphorylation; the sequence is MESGSTAASE…AALAKAIEKN (135 aa). Ser-3 is modified (phosphoserine). The interval 64–96 is disordered; that stretch reads QIQNLQKAGTRTDSREDEISPPPPNPVVKGRRR. Thr-75 is subject to Phosphothreonine. 2 positions are modified to phosphoserine: Ser-77 and Ser-83. Positions 96 to 100 match the Pseudophosphorylation motif motif; that stretch reads RRGAI. Phosphoserine is present on Ser-101. Residues 137–254, Glu-202, Arg-211, 255–381, Glu-326, and Arg-335 each bind 3',5'-cyclic AMP; these read LFSH…SKVS and ILES…SLSV. Ser-258 is subject to Phosphoserine.

It belongs to the cAMP-dependent kinase regulatory chain family. As to quaternary structure, the inactive holoenzyme is composed of two regulatory chains and two catalytic chains. Activation by cAMP releases the two active catalytic monomers and the regulatory dimer. Interacts with PRKACA and PRKACB. PRKAR1A also interacts with RFC2; the complex may be involved in cell survival. Interacts with AKAP4. Interacts with RARA; the interaction occurs in the presence of cAMP or FSH and regulates RARA transcriptional activity. Interacts with the phosphorylated form of PJA2. Interacts with CBFA2T3. Interacts with PRKX; regulates this cAMP-dependent protein kinase. Interacts with smAKAP; this interaction may target PRKAR1A to the plasma membrane. Interacts with AICDA. In terms of processing, the pseudophosphorylation site binds to the substrate-binding region of the catalytic chain, resulting in the inhibition of its activity.

Its subcellular location is the cell membrane. Its function is as follows. Regulatory subunit of the cAMP-dependent protein kinases involved in cAMP signaling in cells. The protein is cAMP-dependent protein kinase type I-alpha regulatory subunit (PRKAR1A) of Pongo abelii (Sumatran orangutan).